A 114-amino-acid polypeptide reads, in one-letter code: Turripeptide OL22 (114 aa).

Post-translationally, contains 6 disulfide bonds. As to expression, expressed by the venom duct.

The protein resides in the secreted. In terms of biological role, acts as a neurotoxin by inhibiting an ion channel. The sequence is that of Turripeptide OL22 from Iotyrris olangoensis (Sea snail).